The chain runs to 166 residues: Lipoprotein signal peptidase (166 aa).

The next 4 helical transmembrane spans lie at 9–29 (ASGA…FDQL), 45–65 (ALTS…FGFL), 71–91 (WQRW…CFLL), and 100–120 (FSLS…DRLV). Catalysis depends on residues D126 and D144. A helical membrane pass occupies residues 135 to 155 (WHFPAFNLADSAITIGAVLLV).

This sequence belongs to the peptidase A8 family.

Its subcellular location is the cell inner membrane. It catalyses the reaction Release of signal peptides from bacterial membrane prolipoproteins. Hydrolyzes -Xaa-Yaa-Zaa-|-(S,diacylglyceryl)Cys-, in which Xaa is hydrophobic (preferably Leu), and Yaa (Ala or Ser) and Zaa (Gly or Ala) have small, neutral side chains.. It functions in the pathway protein modification; lipoprotein biosynthesis (signal peptide cleavage). Functionally, this protein specifically catalyzes the removal of signal peptides from prolipoproteins. The sequence is that of Lipoprotein signal peptidase from Burkholderia ambifaria (strain ATCC BAA-244 / DSM 16087 / CCUG 44356 / LMG 19182 / AMMD) (Burkholderia cepacia (strain AMMD)).